A 162-amino-acid polypeptide reads, in one-letter code: Mitochondrial fission process protein 1 (162 aa).

3 helical membrane passes run 36-56, 81-101, and 128-148; these read SLVK…YVAA, AIIA…IPGF, and TVTA…DAFV.

This sequence belongs to the MTFP1 family.

Its subcellular location is the mitochondrion inner membrane. Its function is as follows. Involved in the mitochondrial division probably by regulating membrane fission. Loss-of-function leads to apoptosis. This is Mitochondrial fission process protein 1 from Caenorhabditis briggsae.